The following is a 137-amino-acid chain: Cell division protein SepF (137 aa).

It belongs to the SepF family. As to quaternary structure, homodimer. Interacts with FtsZ.

Its subcellular location is the cytoplasm. Functionally, cell division protein that is part of the divisome complex and is recruited early to the Z-ring. Probably stimulates Z-ring formation, perhaps through the cross-linking of FtsZ protofilaments. Its function overlaps with FtsA. This chain is Cell division protein SepF, found in Carboxydothermus hydrogenoformans (strain ATCC BAA-161 / DSM 6008 / Z-2901).